Here is a 416-residue protein sequence, read N- to C-terminus: Histidine--tRNA ligase (416 aa).

It belongs to the class-II aminoacyl-tRNA synthetase family. In terms of assembly, homodimer.

The protein resides in the cytoplasm. The catalysed reaction is tRNA(His) + L-histidine + ATP = L-histidyl-tRNA(His) + AMP + diphosphate + H(+). The sequence is that of Histidine--tRNA ligase from Clostridium novyi (strain NT).